A 396-amino-acid chain; its full sequence is Anaerobic glycerol-3-phosphate dehydrogenase subunit C (396 aa).

4Fe-4S ferredoxin-type domains lie at 2–29 and 45–76; these read NDTS…PGYP and DGAL…GDII. [4Fe-4S] cluster-binding residues include Cys9, Cys12, Cys15, Cys19, Cys56, Cys59, Cys62, and Cys66.

In terms of assembly, composed of a catalytic GlpA/B dimer and of GlpC.

The protein localises to the cell inner membrane. It participates in polyol metabolism; glycerol degradation via glycerol kinase pathway; glycerone phosphate from sn-glycerol 3-phosphate (anaerobic route): step 1/1. Electron transfer protein; may also function as the membrane anchor for the GlpAB dimer. In Escherichia coli O157:H7, this protein is Anaerobic glycerol-3-phosphate dehydrogenase subunit C (glpC).